The following is a 303-amino-acid chain: Protease HtpX homolog (303 aa).

Helical transmembrane passes span V4–I24 and M38–L58. A Zn(2+)-binding site is contributed by H144. Residue E145 is part of the active site. H148 provides a ligand contact to Zn(2+). 2 consecutive transmembrane segments (helical) span residues G152 to S172 and I199 to F219. E224 contacts Zn(2+).

This sequence belongs to the peptidase M48B family. Zn(2+) is required as a cofactor.

It localises to the cell inner membrane. This is Protease HtpX homolog from Chlorobium phaeobacteroides (strain BS1).